We begin with the raw amino-acid sequence, 72 residues long: DNA-directed RNA polymerase subunit omega (72 aa).

This sequence belongs to the RNA polymerase subunit omega family. In terms of assembly, the RNAP catalytic core consists of 2 alpha, 1 beta, 1 beta' and 1 omega subunit. When a sigma factor is associated with the core the holoenzyme is formed, which can initiate transcription.

The catalysed reaction is RNA(n) + a ribonucleoside 5'-triphosphate = RNA(n+1) + diphosphate. Functionally, promotes RNA polymerase assembly. Latches the N- and C-terminal regions of the beta' subunit thereby facilitating its interaction with the beta and alpha subunits. The chain is DNA-directed RNA polymerase subunit omega from Clostridium botulinum (strain Langeland / NCTC 10281 / Type F).